A 303-amino-acid chain; its full sequence is N-acetyl-D-glucosamine kinase (303 aa).

ATP is bound by residues 4-11 (GFDIGGTK) and 133-140 (GVGGGLVL). Positions 157, 177, 179, and 184 each coordinate Zn(2+).

Belongs to the ROK (NagC/XylR) family. NagK subfamily.

It catalyses the reaction N-acetyl-D-glucosamine + ATP = N-acetyl-D-glucosamine 6-phosphate + ADP + H(+). Its pathway is cell wall biogenesis; peptidoglycan recycling. Functionally, catalyzes the phosphorylation of N-acetyl-D-glucosamine (GlcNAc) derived from cell-wall degradation, yielding GlcNAc-6-P. The chain is N-acetyl-D-glucosamine kinase from Salmonella paratyphi A (strain ATCC 9150 / SARB42).